Consider the following 465-residue polypeptide: MLPSTIQTLTLFLTSGGVLLSLYVSASLSYLLYSDILLKFSPKITAPTMTLDCANASNVQAVNRSATKEMTFLLPEPEWTYPRLSCQGSTFQKALLISPHRFGEARGNSAPLIIREPFIACGPKECKHFALTHYAAQPGGYYNGTREDRNKLRHLISVKLGKIPTVENSIFHMAAWSGSACHDGREWTYIGVDGPDSNALIKIKYGEAYTDTYHSYANNILRTQESACNCIGGDCYLMITDGSASGISECRFLKIREGRIIKEIFPTGRVEHTEECTCGFASNKTIECACRDNNYTAKRPFVKLNVETDTAEIRLMCTETYLDTPRPDDGSITGPCESNGDKGRGGIKGGFVHQRMASKIGRWYSRTMSKTERMGMELYVKYDGDPWTDSDALAPSGVMVSIKEPGWYSFGFEIKDKKCDVPCIGIEMVHDGGKKTWHSAATAIYCLMGSGQLLWDTVTGVDMAL.

At 1-11 the chain is on the intravirion side; the sequence is MLPSTIQTLTL. The helical transmembrane segment at 12-34 threads the bilayer; that stretch reads FLTSGGVLLSLYVSASLSYLLYS. The involved in apical transport and lipid raft association stretch occupies residues 13–35; it reads LTSGGVLLSLYVSASLSYLLYSD. Topologically, residues 35-465 are virion surface; sequence DILLKFSPKI…DTVTGVDMAL (431 aa). A hypervariable stalk region region spans residues 38 to 85; the sequence is LKFSPKITAPTMTLDCANASNVQAVNRSATKEMTFLLPEPEWTYPRLS. 2 N-linked (GlcNAc...) asparagine; by host glycosylation sites follow: Asn-55 and Asn-63. 8 disulfides stabilise this stretch: Cys-86/Cys-419, Cys-121/Cys-126, Cys-181/Cys-228, Cys-230/Cys-235, Cys-276/Cys-290, Cys-278/Cys-288, Cys-317/Cys-336, and Cys-423/Cys-446. Residues 88-465 form a head of neuraminidase region; the sequence is GSTFQKALLI…DTVTGVDMAL (378 aa). Arg-115 contributes to the substrate binding site. N-linked (GlcNAc...) asparagine; by host glycosylation occurs at Asn-143. The Proton donor/acceptor role is filled by Asp-148. Arg-149 provides a ligand contact to substrate. 274-275 is a binding site for substrate; it reads EE. An N-linked (GlcNAc...) asparagine; by host glycan is attached at Asn-283. Arg-291 contributes to the substrate binding site. Asp-292 is a binding site for Ca(2+). The N-linked (GlcNAc...) asparagine; by host glycan is linked to Asn-294. Asp-323 lines the Ca(2+) pocket. Arg-373 is a substrate binding site. The active-site Nucleophile is Tyr-408.

The protein belongs to the glycosyl hydrolase 34 family. As to quaternary structure, homotetramer. Ca(2+) serves as cofactor. N-glycosylated.

It localises to the virion membrane. It is found in the host apical cell membrane. It catalyses the reaction Hydrolysis of alpha-(2-&gt;3)-, alpha-(2-&gt;6)-, alpha-(2-&gt;8)- glycosidic linkages of terminal sialic acid residues in oligosaccharides, glycoproteins, glycolipids, colominic acid and synthetic substrates.. Its activity is regulated as follows. Inhibited by the neuraminidase inhibitors zanamivir (Relenza) and oseltamivir (Tamiflu). These drugs interfere with the release of progeny virus from infected cells and are effective against all influenza strains. Resistance to neuraminidase inhibitors is quite rare. Catalyzes the removal of terminal sialic acid residues from viral and cellular glycoconjugates. Cleaves off the terminal sialic acids on the glycosylated HA during virus budding to facilitate virus release. Additionally helps virus spread through the circulation by further removing sialic acids from the cell surface. These cleavages prevent self-aggregation and ensure the efficient spread of the progeny virus from cell to cell. Otherwise, infection would be limited to one round of replication. Described as a receptor-destroying enzyme because it cleaves a terminal sialic acid from the cellular receptors. May facilitate viral invasion of the upper airways by cleaving the sialic acid moieties on the mucin of the airway epithelial cells. Likely to plays a role in the budding process through its association with lipid rafts during intracellular transport. May additionally display a raft-association independent effect on budding. Plays a role in the determination of host range restriction on replication and virulence. Sialidase activity in late endosome/lysosome traffic seems to enhance virus replication. This is Neuraminidase from Homo sapiens (Human).